Here is a 517-residue protein sequence, read N- to C-terminus: Amidophosphoribosyltransferase (517 aa).

Position 1 is an N-acetylmethionine (M1). The propeptide occupies 1–11 (MELEELGIREE). The active-site Nucleophile is the C12. The Glutamine amidotransferase type-2 domain occupies 12-261 (CGVFGCIASG…PGEIVEISRH (250 aa)). A [4Fe-4S] cluster-binding site is contributed by C280. 3 residues coordinate Mg(2+): S327, D389, and D390. The [4Fe-4S] cluster site is built by C426, C503, and C506.

This sequence in the C-terminal section; belongs to the purine/pyrimidine phosphoribosyltransferase family. In terms of assembly, homotetramer. It depends on Mg(2+) as a cofactor. [4Fe-4S] cluster serves as cofactor. In terms of tissue distribution, ubiquitously expressed.

The catalysed reaction is 5-phospho-beta-D-ribosylamine + L-glutamate + diphosphate = 5-phospho-alpha-D-ribose 1-diphosphate + L-glutamine + H2O. The protein operates within purine metabolism; IMP biosynthesis via de novo pathway; N(1)-(5-phospho-D-ribosyl)glycinamide from 5-phospho-alpha-D-ribose 1-diphosphate: step 1/2. Functionally, catalyzes the formation of phosphoribosylamine from phosphoribosylpyrophosphate (PRPP) and glutamine. This Homo sapiens (Human) protein is Amidophosphoribosyltransferase (PPAT).